A 147-amino-acid polypeptide reads, in one-letter code: UPF0178 protein Patl_1318 (147 aa).

It belongs to the UPF0178 family.

This Pseudoalteromonas atlantica (strain T6c / ATCC BAA-1087) protein is UPF0178 protein Patl_1318.